The sequence spans 190 residues: Potassium-transporting ATPase KdpC subunit (190 aa).

The chain crosses the membrane as a helical span at residues proline 7–valine 27.

The protein belongs to the KdpC family. As to quaternary structure, the system is composed of three essential subunits: KdpA, KdpB and KdpC.

It is found in the cell inner membrane. Functionally, part of the high-affinity ATP-driven potassium transport (or Kdp) system, which catalyzes the hydrolysis of ATP coupled with the electrogenic transport of potassium into the cytoplasm. This subunit acts as a catalytic chaperone that increases the ATP-binding affinity of the ATP-hydrolyzing subunit KdpB by the formation of a transient KdpB/KdpC/ATP ternary complex. This is Potassium-transporting ATPase KdpC subunit from Methylococcus capsulatus (strain ATCC 33009 / NCIMB 11132 / Bath).